Consider the following 248-residue polypeptide: Triosephosphate isomerase (248 aa).

Substrate is bound at residue 9–11 (NWK). The active-site Electrophile is the histidine 94. Glutamate 166 (proton acceptor) is an active-site residue. Residues glycine 172, serine 212, and 233 to 234 (GG) contribute to the substrate site.

The protein belongs to the triosephosphate isomerase family. As to quaternary structure, homodimer.

It localises to the cytoplasm. It carries out the reaction D-glyceraldehyde 3-phosphate = dihydroxyacetone phosphate. The protein operates within carbohydrate biosynthesis; gluconeogenesis. Its pathway is carbohydrate degradation; glycolysis; D-glyceraldehyde 3-phosphate from glycerone phosphate: step 1/1. Involved in the gluconeogenesis. Catalyzes stereospecifically the conversion of dihydroxyacetone phosphate (DHAP) to D-glyceraldehyde-3-phosphate (G3P). The polypeptide is Triosephosphate isomerase (Caldanaerobacter subterraneus subsp. tengcongensis (strain DSM 15242 / JCM 11007 / NBRC 100824 / MB4) (Thermoanaerobacter tengcongensis)).